We begin with the raw amino-acid sequence, 411 residues long: D-ribitol-5-phosphate cytidylyltransferase (411 aa).

The protein belongs to the IspD/TarI cytidylyltransferase family. IspD subfamily. Homodimer.

It is found in the cytoplasm. The protein resides in the cytosol. The catalysed reaction is D-ribitol 5-phosphate + CTP + H(+) = CDP-L-ribitol + diphosphate. The enzyme catalyses D-ribose 5-phosphate + CTP + H(+) = CDP-D-ribose + diphosphate. It carries out the reaction D-ribulose 5-phosphate + CTP + H(+) = CDP-D-ribulose + diphosphate. It functions in the pathway protein modification; protein glycosylation. Cytidylyltransferase required for protein O-linked mannosylation. Catalyzes the formation of CDP-ribitol nucleotide sugar from D-ribitol 5-phosphate. CDP-ribitol is a substrate of FKTN during the biosynthesis of the phosphorylated O-mannosyl trisaccharide (N-acetylgalactosamine-beta-3-N-acetylglucosamine-beta-4-(phosphate-6-)mannose), a carbohydrate structure present in alpha-dystroglycan (DAG1), which is required for binding laminin G-like domain-containing extracellular proteins with high affinity. Shows activity toward other pentose phosphate sugars and mediates formation of CDP-ribulose or CDP-ribose using CTP and ribulose-5-phosphate or ribose-5-phosphate, respectively. Not involved in dolichol production. This is D-ribitol-5-phosphate cytidylyltransferase (crppa) from Xenopus tropicalis (Western clawed frog).